An 838-amino-acid chain; its full sequence is MHLIPKELDKLVISQLGFLAQRRLARGVRLNHAEAAALISSNLQELIRDGHYSVADLMSIGKTMLGRRHVLPSVVHTLVELQVEGTFPTGTYLVTVHHPISSDDGDLEKALYGSFLPIPPADTFPDPNPDDYLPEKMPGAVLPVKNERITLNDGRKRIRLKVMSKGDRPIQVGSHYHFIETNPQLHFDRLRAYGYRLDIPAGTSVRFEPGDTKTVTLVEIAGNRIIKGGNSIASGKVDISRAEEILQRLQVEGFAHVPEPAPTADSALIAPFTMDREAYARMFGPTTGDLVRLGLTNLWVRVEKDCTVYGDECAFGGGKTLREGMGQSSERSATECLDTVITNALIIDWSGIYKADIGIKNGLISAIGKAGNPDMMDGVHPDMIVGSSTDVIAGENKIVTAGGFDTHIHFICPQQVDEALASGITTFLGGGTGPSTGTNATTCTPGPTLMRQMIQACDGLPINVGITGKGNDSGGKSIEEQIRAGAAGLKLHEDWGSTPAAIDTCLDMCDKFDVQCMIHTDTLNESGFVEQTVKSFKNRTIHTYHTEGAGGGHAPDIISVVEHPNVLPSSTNPTRPFTMNTLDEHLDMLMVCHHLSKNIPEDVAFAESRIRAETIAAEDVLHDLGAISMMSSDSQAMGRCGEVILRTWNTAHKNKAQRGPLKEDEGTGADNFRVKRYISKYTINPAIAQGMSHLIGSVEVGKLADLVIWHPSTFGTKPAQVLKSGMIVASQMGDPNGSIPTIEPVVMRRQFGAFVPSTSIMWVSQASIDDGIVQSYGLKKRIEAVRNCRNIGKKDMKFNDVMPKMRVDPESYVVEADGVLCDAEPAEALPLTQDYFVY.

A Urease domain is found at 402 to 838 (GGFDTHIHFI…LPLTQDYFVY (437 aa)). Ni(2+) contacts are provided by histidine 407, histidine 409, and lysine 490. Lysine 490 carries the post-translational modification N6-carboxylysine. Histidine 492 provides a ligand contact to substrate. 2 residues coordinate Ni(2+): histidine 519 and histidine 545. The Proton donor role is filled by histidine 593. Aspartate 633 contributes to the Ni(2+) binding site.

In the C-terminal section; belongs to the metallo-dependent hydrolases superfamily. Urease alpha subunit family. As to quaternary structure, homohexamer. The cofactor is Ni cation. Post-translationally, carboxylation allows a single lysine to coordinate two nickel ions.

The catalysed reaction is urea + 2 H2O + H(+) = hydrogencarbonate + 2 NH4(+). The protein operates within nitrogen metabolism; urea degradation; CO(2) and NH(3) from urea (urease route): step 1/1. The sequence is that of Urease (ure1) from Aspergillus fumigatus (strain ATCC MYA-4609 / CBS 101355 / FGSC A1100 / Af293) (Neosartorya fumigata).